The following is a 97-amino-acid chain: Nucleoid-associated protein Hac_0048 (97 aa).

Belongs to the YbaB/EbfC family. In terms of assembly, homodimer.

The protein resides in the cytoplasm. The protein localises to the nucleoid. Its function is as follows. Binds to DNA and alters its conformation. May be involved in regulation of gene expression, nucleoid organization and DNA protection. The protein is Nucleoid-associated protein Hac_0048 of Helicobacter acinonychis (strain Sheeba).